Here is an 865-residue protein sequence, read N- to C-terminus: Xylosyltransferase 2 (865 aa).

Residues 1-15 (MVASARVQKLVRRYK) are Cytoplasmic-facing. The chain crosses the membrane as a helical; Signal-anchor for type II membrane protein span at residues 16–36 (LAIATALAILLLQGLVVWSFS). Residues 37-865 (GLEEDEPGEK…GPVKADGRLR (829 aa)) are Lumenal-facing. Residues 39-157 (EEDEPGEKGR…EGAPQPTDNG (119 aa)) are disordered. The segment covering 53-65 (RPLDPGEGSKDTD) has biased composition (basic and acidic residues). Residues 73-82 (SAGRRHGRWR) show a composition bias toward basic residues. An N-linked (GlcNAc...) asparagine glycan is attached at Asn122. Positions 125 to 137 (GAAAGEALVGAAG) are enriched in low complexity. Intrachain disulfides connect Cys162-Cys190, Cys206-Cys448, Cys467-Cys480, and Cys469-Cys478. UDP-alpha-D-xylose-binding positions include Val239, Asp267, and 296-298 (TIW). An N-linked (GlcNAc...) asparagine glycan is attached at Asn327. 400 to 401 (DW) serves as a coordination point for UDP-alpha-D-xylose. UDP-alpha-D-xylose is bound by residues Ser481 and 504-505 (RK). 2 disulfide bridges follow: Cys581/Cys833 and Cys826/Cys839. Asn683 is a glycosylation site (N-linked (GlcNAc...) asparagine).

The protein belongs to the glycosyltransferase 14 family. XylT subfamily. As to quaternary structure, monomer. Mg(2+) serves as cofactor. The cofactor is Mn(2+). In terms of processing, contains disulfide bonds.

It localises to the golgi apparatus membrane. Its subcellular location is the secreted. The enzyme catalyses UDP-alpha-D-xylose + L-seryl-[protein] = 3-O-(beta-D-xylosyl)-L-seryl-[protein] + UDP + H(+). The protein operates within glycan metabolism; chondroitin sulfate biosynthesis. It participates in glycan metabolism; heparan sulfate biosynthesis. Catalyzes the first step in the biosynthesis of chondroitin sulfate, heparan sulfate and dermatan sulfate proteoglycans, such as DCN. Transfers D-xylose from UDP-D-xylose to specific serine residues of the core protein. In Canis lupus familiaris (Dog), this protein is Xylosyltransferase 2 (XYLT2).